Consider the following 257-residue polypeptide: Chymotrypsin-like elastase family member 3B (257 aa).

Positions valine 1–alanine 2 form a signal peptide, or 3. Residues serine 3–arginine 15 constitute a propeptide, activation peptide. One can recognise a Peptidase S1 domain in the interval valine 16 to alanine 255. N-linked (GlcNAc...) asparagine glycosylation occurs at asparagine 38. 2 disulfide bridges follow: cysteine 45/cysteine 61 and cysteine 104/cysteine 107. Histidine 60 acts as the Charge relay system in catalysis. Catalysis depends on aspartate 110, which acts as the Charge relay system. 3 cysteine pairs are disulfide-bonded: cysteine 144–cysteine 210, cysteine 175–cysteine 191, and cysteine 200–cysteine 231. Serine 204 functions as the Charge relay system in the catalytic mechanism.

The protein belongs to the peptidase S1 family. Elastase subfamily.

It catalyses the reaction Preferential cleavage: Ala-|-Xaa. Does not hydrolyze elastin.. Efficient protease with alanine specificity but only little elastolytic activity. This chain is Chymotrypsin-like elastase family member 3B (CELA3B), found in Macaca mulatta (Rhesus macaque).